The primary structure comprises 151 residues: UPF0208 membrane protein ECA3038 (151 aa).

Helical transmembrane passes span phenylalanine 46–glycine 66 and leucine 69–tryptophan 89.

It belongs to the UPF0208 family.

The protein localises to the cell inner membrane. The chain is UPF0208 membrane protein ECA3038 from Pectobacterium atrosepticum (strain SCRI 1043 / ATCC BAA-672) (Erwinia carotovora subsp. atroseptica).